Here is a 371-residue protein sequence, read N- to C-terminus: Zinc transporter ZIP13 (371 aa).

Residues 1–7 (MPGCPCP) lie on the Lumenal side of the membrane. Residues 8–28 (GCGMAGPRLLFLTALALELLE) traverse the membrane as a helical segment. Residues 29-68 (RAGGSQPALRSRGTATACRLDNKESESWGALLSGERLDTW) are Cytoplasmic-facing. A helical membrane pass occupies residues 69 to 89 (ICSLLGSLMVGLSGVFPLLVI). At 90–108 (PLEMGTMLRSEAGAWRLKQ) the chain is on the lumenal side. The helical transmembrane segment at 109–129 (LLSFALGGLLGNVFLHLLPEA) threads the bilayer. The Cytoplasmic segment spans residues 130 to 149 (WAYTCSASPGGEGQSLQQQQ). A helical membrane pass occupies residues 150 to 170 (QLGLWVIAGILTFLALEKMFL). At 171–235 (DSKEEGTSQA…TIDNFTHGLA (65 aa)) the chain is on the lumenal side. A helical membrane pass occupies residues 236–256 (VAASFLVSKKIGLLTTMAILL). The short motif at 257-262 (HEIPHE) is the XEXPHE-motif element. The Cytoplasmic segment spans residues 257-278 (HEIPHEVGDFAILLRAGFDRWS). A helical membrane pass occupies residues 279–299 (AAKLQLSTALGGLLGAGFAIC). Topologically, residues 300–316 (TQSPKGVVGCSPAAEET) are lumenal. A helical transmembrane segment spans residues 317–337 (AAWVLPFTSGGFLYIALVNVL). The Cytoplasmic segment spans residues 338 to 349 (PDLLEEEDPWRS). The helical transmembrane segment at 350–370 (LQQLLLLCAGIVVMVLFSLFV) threads the bilayer. Position 371 (Asp371) is a topological domain, lumenal.

The protein belongs to the ZIP transporter (TC 2.A.5) family. As to quaternary structure, homodimer.

It localises to the golgi apparatus membrane. Its subcellular location is the cytoplasmic vesicle membrane. The protein resides in the endoplasmic reticulum membrane. The catalysed reaction is Zn(2+)(in) = Zn(2+)(out). Functionally, functions as a zinc transporter transporting Zn(2+) from the Golgi apparatus to the cytosol and thus influences the zinc level at least in areas of the cytosol. May regulate beige adipocyte differentiation. The sequence is that of Zinc transporter ZIP13 from Homo sapiens (Human).